The sequence spans 205 residues: Large ribosomal subunit protein uL3 (205 aa).

It belongs to the universal ribosomal protein uL3 family. As to quaternary structure, part of the 50S ribosomal subunit. Forms a cluster with proteins L14 and L19.

Its function is as follows. One of the primary rRNA binding proteins, it binds directly near the 3'-end of the 23S rRNA, where it nucleates assembly of the 50S subunit. This Bacteroides thetaiotaomicron (strain ATCC 29148 / DSM 2079 / JCM 5827 / CCUG 10774 / NCTC 10582 / VPI-5482 / E50) protein is Large ribosomal subunit protein uL3.